Here is a 784-residue protein sequence, read N- to C-terminus: MKKRIPTLLATMIATALYSQQGLAADLASQCMLGVPSYDRPLVQGDTNDLPVTINADHAKGDYPDDAVFTGSVDIMQGNSRLQADEVQLHQKEAPGQPEPVRTVDALGNVHYDDNQVILKGPKGWANLNTKDTNVWEGDYQMVGRQGRGKADLMKQRGENRYTILDNGSFTSCLPGSDTWSVVGSEIIHDREEQVAEIWNARFKVGPVPIFYSPYLQLPVGDKRRSGFLIPNAKYTTTNYFEFYLPYYWNIAPNMDATITPHYMHRRGNIMWENEFRYLSQAGAGLMELDYLPSDKVYKDEHPNDDSSRRWLFYWNHSGVMDQVWRFNVDYTKVSDPSYFNDFDNKYGSSTDGYATQKFSVGYAVQNFNATVSTKQFQVFSEQNTSSYSAEPQLDVNYYQNDVGPFDTRIYGQAVHFVNTRDDMPEATRVHLEPTINLPLSNNWGSINTEAKLLATHYQQTNLDWYNSRNTTRLAESANRVMPQFKVDGRMVFERDMEMLAPGYTQTLEPRAQYLYVPYRDQSKIYNYDSSLLQSDYSGLFRDRTYGGLDRIASANQVTTGVTSRIYDDAAVERFNISVGQIYYFTESRTGDDNITWENDDKTGSLVWAGDTYWRISDRWGLRGGIQYDTRLDNVATSNSSIEYRRDEDRLVQLNYRYASPEYIQATLPKYYSTAEQYKNGISQVGAVASWPIADRWSIVGAYYYDTNANKQADSMLGVQYSSCCYAIRVGYERKLNGWDNDKQHAVYDNAIGFNIELRGLSSNYGLGTQEMLRSNILPYQNTL.

Residues 1–24 form the signal peptide; that stretch reads MKKRIPTLLATMIATALYSQQGLA. 2 cysteine pairs are disulfide-bonded: Cys-31-Cys-724 and Cys-173-Cys-725.

It belongs to the LptD family. In terms of assembly, component of the lipopolysaccharide transport and assembly complex. Interacts with LptE and LptA. In terms of processing, contains two intramolecular disulfide bonds.

The protein localises to the cell outer membrane. Together with LptE, is involved in the assembly of lipopolysaccharide (LPS) at the surface of the outer membrane. In Escherichia coli O6:K15:H31 (strain 536 / UPEC), this protein is LPS-assembly protein LptD.